Consider the following 207-residue polypeptide: Nuclear transcription factor Y subunit beta (207 aa).

The segment at Met1–Phe52 is a domain. The segment at Tyr27 to Phe52 is disordered. Over residues Met39 to Phe52 the composition is skewed to basic and acidic residues. Residues Arg53–Arg142 are b domain. A DNA-binding region spans residues Leu59–Ala65. Residues Val86–Ile97 form a subunit association domain (SAD) region. Lys140 is covalently cross-linked (Glycyl lysine isopeptide (Lys-Gly) (interchain with G-Cter in ubiquitin)). The segment at Glu143–Ser207 is c domain.

The protein belongs to the NFYB/HAP3 subunit family. Heterotrimeric transcription factor composed of three components, NF-YA, NF-YB and NF-YC. NF-YB and NF-YC must interact and dimerize for NF-YA association and DNA binding. Interacts with C1QBP. Post-translationally, monoubiquitination at Lys-140 plays an important role in transcriptional activation by allowing the deposition of histone H3 methylations as well as histone H2B monoubiquitination at 'Lys-121'.

It is found in the nucleus. Component of the sequence-specific heterotrimeric transcription factor (NF-Y) which specifically recognizes a 5'-CCAAT-3' box motif found in the promoters of its target genes. NF-Y can function as both an activator and a repressor, depending on its interacting cofactors. This chain is Nuclear transcription factor Y subunit beta (NFYB), found in Equus caballus (Horse).